Consider the following 919-residue polypeptide: Tight junction protein ZO-3 (919 aa).

Positions 11 to 93 constitute a PDZ 1 domain; sequence TATLSKDPRR…MANITVKRPR (83 aa). The disordered stretch occupies residues 92–173; that stretch reads PRRIHLPATK…SPGGGSEANG (82 aa). Position 112 is a phosphoserine (Ser112). The span at 117 to 131 shows a compositional bias: basic and acidic residues; the sequence is GPQRVEEVDQGRGYD. Residue Ser136 is modified to Phosphoserine. The span at 147–163 shows a compositional bias: basic residues; it reads RRPRPGRRGRAGSHGRR. Phosphoserine is present on residues Ser164, Ser169, Ser203, and Ser319. The PDZ 2 domain occupies 195–272; sequence SVLVKRRDSE…KLSLLVLRDR (78 aa). Residues 279–377 are disordered; that stretch reads IPPAVSDSDS…SSQSMEDRGY (99 aa). Thr325 carries the post-translational modification Phosphothreonine. Phosphoserine is present on Ser327. Residues 332–360 are compositionally biased toward basic and acidic residues; the sequence is PRLRRESSVDSRTISEPDEQRSELPRESS. Ser371 is subject to Phosphoserine. A PDZ 3 domain is found at 380 to 446; it reads DTRVVRFLKG…LTREEAVQFL (67 aa). An SH3 domain is found at 475-549; the sequence is GDSFYIRTHF…PNQSRAEQLA (75 aa). Residues 580 to 761 enclose the Guanylate kinase-like domain; the sequence is LRRGAKKTTQ…WYQELKAIIR (182 aa). At Ser591 the chain carries Phosphoserine. Low complexity predominate over residues 791–801; that stretch reads ADSSADLSCDS. 2 disordered regions span residues 791-886 and 899-919; these read ADSS…DSMR and RVHD…ATDL. The segment covering 812-828 has biased composition (gly residues); the sequence is EGGAYTDGEGYTDGEGG. Ser856, Ser905, and Ser906 each carry phosphoserine.

The protein belongs to the MAGUK family. Interacts with occludin OCLN, claudins and TPJ1. Interacts with PATJ. Interacts with UBN1. Interacts with FASLG. Interacts with CCND1. Post-translationally, phosphorylated.

Its subcellular location is the cell membrane. The protein resides in the cell junction. It localises to the tight junction. The protein localises to the nucleus. TJP1, TJP2, and TJP3 are closely related scaffolding proteins that link tight junction (TJ) transmembrane proteins such as claudins, junctional adhesion molecules, and occludin to the actin cytoskeleton. The tight junction acts to limit movement of substances through the paracellular space and as a boundary between the compositionally distinct apical and basolateral plasma membrane domains of epithelial and endothelial cells. Binds and recruits PATJ to tight junctions where it connects and stabilizes apical and lateral components of tight junctions. Promotes cell-cycle progression through the sequestration of cyclin D1 (CCND1) at tight junctions during mitosis which prevents CCND1 degradation during M-phase and enables S-phase transition. With TJP1 and TJP2, participates in the junctional retention and stability of the transcription factor DBPA, but is not involved in its shuttling to the nucleus. Contrary to TJP2, TJP3 is dispensable for individual viability, embryonic development, epithelial differentiation, and the establishment of TJs, at least in the laboratory environment. This chain is Tight junction protein ZO-3 (TJP3), found in Homo sapiens (Human).